Reading from the N-terminus, the 580-residue chain is Glypican-3 (580 aa).

A signal peptide spans 1 to 24 (MAGTVRTACLVVAMLLSLDFPGQA). Glutamine 25 bears the Pyrrolidone carboxylic acid mark. 7 cysteine pairs are disulfide-bonded: cysteine 35–cysteine 72, cysteine 65–cysteine 262, cysteine 73–cysteine 265, cysteine 197–cysteine 349, cysteine 252–cysteine 285, cysteine 274–cysteine 422, and cysteine 278–cysteine 410. N-linked (GlcNAc...) asparagine glycosylation is found at asparagine 124 and asparagine 241. Residue serine 352 is modified to Phosphoserine; by FAM20C. Asparagine 418 carries N-linked (GlcNAc...) asparagine glycosylation. 2 O-linked (Xyl...) (glycosaminoglycan) serine glycosylation sites follow: serine 495 and serine 509. Asparagine 554 carries GPI-anchor amidated asparagine lipidation. The propeptide at 555 to 580 (LGNVHSPLKLLTSMAISVVCFFFLVH) is removed in mature form.

Belongs to the glypican family. In terms of assembly, heterodimer; disulfide-linked. Cleavage by a furin-like convertase results in production of alpha and beta chains which form a disulfide-linked heterodimer. Interacts with DPP4. Interacts with FGF2. Interacts with WNT5A. Also interacts with WNT3A and WNT7B. Interacts with hedgehog protein SHH; the heparan sulfate chains are not required for the interaction. Also interacts with hedgehog protein IHH. Interacts with CD81. Interacts with Wnt receptors FZD4, FZD7 and FZD8; the heparan sulfate chains are required for the interaction. In terms of processing, O-glycosylated; contains heparan sulfate and/or chondroitin sulfate. Post-translationally, cleaved intracellularly by a furin-like convertase to generate 2 subunits, alpha and beta, which remain associated through disulfide bonds and are associated with the cell surface via the GPI-anchor. This processing is essential for its role in inhibition of hedgehog signaling. A second proteolytic event may result in cleavage of the protein on the cell surface, separating it from the GPI-anchor and leading to its shedding from the cell surface. Detected in placenta (at protein level). Highly expressed in lung, liver and kidney.

The protein resides in the cell membrane. Its function is as follows. Cell surface proteoglycan. Negatively regulates the hedgehog signaling pathway when attached via the GPI-anchor to the cell surface by competing with the hedgehog receptor PTC1 for binding to hedgehog proteins. Binding to the hedgehog protein SHH triggers internalization of the complex by endocytosis and its subsequent lysosomal degradation. Positively regulates the canonical Wnt signaling pathway by binding to the Wnt receptor Frizzled and stimulating the binding of the Frizzled receptor to Wnt ligands. Positively regulates the non-canonical Wnt signaling pathway. Binds to CD81 which decreases the availability of free CD81 for binding to the transcriptional repressor HHEX, resulting in nuclear translocation of HHEX and transcriptional repression. Inhibits the dipeptidyl peptidase activity of DPP4. Plays a role in limb patterning and skeletal development by controlling the cellular response to BMP4. Modulates the effects of growth factors BMP2, BMP7 and FGF7 on renal branching morphogenesis. Required for coronary vascular development. Plays a role in regulating cell movements during gastrulation. The polypeptide is Glypican-3 (GPC3) (Homo sapiens (Human)).